The chain runs to 103 residues: UPF0145 protein HH_1800 (103 aa).

The protein belongs to the UPF0145 family.

This is UPF0145 protein HH_1800 from Helicobacter hepaticus (strain ATCC 51449 / 3B1).